The following is a 100-amino-acid chain: MHLQPKDQEKLLVVVAADLARRRQARGLKLNHPEAIAIITYELLEGARDGRTVAELMSWGSTILSREDVMEGVPEMIPDVQVEATFPDGTKLVTVHDPIR.

It belongs to the urease gamma subunit family. In terms of assembly, heterotrimer of UreA (gamma), UreB (beta) and UreC (alpha) subunits. Three heterotrimers associate to form the active enzyme.

The protein resides in the cytoplasm. The enzyme catalyses urea + 2 H2O + H(+) = hydrogencarbonate + 2 NH4(+). It participates in nitrogen metabolism; urea degradation; CO(2) and NH(3) from urea (urease route): step 1/1. The protein is Urease subunit gamma of Kocuria rhizophila (strain ATCC 9341 / DSM 348 / NBRC 103217 / DC2201).